Reading from the N-terminus, the 343-residue chain is Acetylglutamate kinase (343 aa).

Residues 98-99 (GG), Arg-120, and Asn-219 each bind substrate.

It belongs to the acetylglutamate kinase family. ArgB subfamily.

Its subcellular location is the cytoplasm. It carries out the reaction N-acetyl-L-glutamate + ATP = N-acetyl-L-glutamyl 5-phosphate + ADP. It participates in amino-acid biosynthesis; L-arginine biosynthesis; N(2)-acetyl-L-ornithine from L-glutamate: step 2/4. Its function is as follows. Catalyzes the ATP-dependent phosphorylation of N-acetyl-L-glutamate. In Frankia alni (strain DSM 45986 / CECT 9034 / ACN14a), this protein is Acetylglutamate kinase.